Here is a 174-residue protein sequence, read N- to C-terminus: Shikimate kinase 2 (174 aa).

12 to 17 (GAGKTT) lines the ATP pocket. 2 residues coordinate Mg(2+): Thr-16 and Asp-32. 3 residues coordinate substrate: Asp-34, Arg-58, and Gly-79. An LID domain region spans residues 112–126 (MQQPESTQRPSLTGK). Arg-120 is an ATP binding site. A substrate-binding site is contributed by Arg-139.

The protein belongs to the shikimate kinase family. AroL subfamily. Monomer. Requires Mg(2+) as cofactor.

The protein localises to the cytoplasm. The enzyme catalyses shikimate + ATP = 3-phosphoshikimate + ADP + H(+). Its pathway is metabolic intermediate biosynthesis; chorismate biosynthesis; chorismate from D-erythrose 4-phosphate and phosphoenolpyruvate: step 5/7. In terms of biological role, catalyzes the specific phosphorylation of the 3-hydroxyl group of shikimic acid using ATP as a cosubstrate. This chain is Shikimate kinase 2, found in Photorhabdus laumondii subsp. laumondii (strain DSM 15139 / CIP 105565 / TT01) (Photorhabdus luminescens subsp. laumondii).